The following is a 300-amino-acid chain: Mitochondrial GTP/GDP carrier protein 1 (300 aa).

3 Solcar repeats span residues 8–108 (QSGL…KKDF), 117–198 (GKAM…AKEY), and 208–293 (ATWS…LIPR). The next 6 helical transmembrane spans lie at 14–34 (LLGS…VDTI), 85–101 (QRVY…EFLN), 122–142 (SAAA…LDVL), 173–189 (GWGW…FALF), 214–234 (FISS…LDVI), and 268–285 (GLTP…FSFA).

It belongs to the mitochondrial carrier (TC 2.A.29) family.

The protein localises to the mitochondrion inner membrane. Mitochondrial GTP/GDP transporter required for GTP uptake and GDP exit from mitochondria. Involved in mitochondrial iron transport and essential for mitochondrial genome maintenance. This chain is Mitochondrial GTP/GDP carrier protein 1 (GGC1), found in Saccharomyces cerevisiae (strain ATCC 204508 / S288c) (Baker's yeast).